Consider the following 299-residue polypeptide: Small ribosomal subunit biogenesis GTPase RsgA (299 aa).

In terms of domain architecture, CP-type G spans 73–232 (CSWLTRPQVA…VADTPGFNRP (160 aa)). Residues 122-125 (TKGD) and 174-182 (GPSGVGKSS) each bind GTP. 4 residues coordinate Zn(2+): C257, C262, H264, and C270.

It belongs to the TRAFAC class YlqF/YawG GTPase family. RsgA subfamily. Monomer. Associates with 30S ribosomal subunit, binds 16S rRNA. It depends on Zn(2+) as a cofactor.

Its subcellular location is the cytoplasm. One of several proteins that assist in the late maturation steps of the functional core of the 30S ribosomal subunit. Helps release RbfA from mature subunits. May play a role in the assembly of ribosomal proteins into the subunit. Circularly permuted GTPase that catalyzes slow GTP hydrolysis, GTPase activity is stimulated by the 30S ribosomal subunit. This Parasynechococcus marenigrum (strain WH8102) protein is Small ribosomal subunit biogenesis GTPase RsgA.